We begin with the raw amino-acid sequence, 338 residues long: Deoxyhypusine hydroxylase (338 aa).

HEAT-like PBS-type repeat units lie at residues 71–97 (LKHE…VLKD), 104–130 (CRHE…LKDD), 200–233 (QRYR…GLKD), 238–264 (FRHE…CLSN), and 271–298 (VRHE…FLND). Fe cation-binding residues include H73, E74, H106, and E107. Positions 240, 241, 273, and 274 each coordinate Fe cation.

The protein belongs to the deoxyhypusine hydroxylase family. It depends on Fe(2+) as a cofactor.

The protein resides in the cytoplasm. The protein localises to the nucleus. The enzyme catalyses [eIF5A protein]-deoxyhypusine + AH2 + O2 = [eIF5A protein]-hypusine + A + H2O. It functions in the pathway protein modification; eIF5A hypusination. In terms of biological role, catalyzes the hydroxylation of the N(6)-(4-aminobutyl)-L-lysine intermediate to form hypusine, an essential post-translational modification only found in mature eIF-5A factor. This is Deoxyhypusine hydroxylase (lia1) from Aspergillus niger (strain ATCC MYA-4892 / CBS 513.88 / FGSC A1513).